We begin with the raw amino-acid sequence, 147 residues long: MGIITLSGNVLHLLKAYPKKGLEEVSQPEPNTANDSSTEYKGKSKDDFQMVEKSNTDERYNFTRTKKWFLLMTSEYYKLMENRLLMFCIIACSFICAIQFLFFIIYWTNIVPRKTQRAITNLNYDYLTAHLKEQCVPYAKILDQCIL.

A disordered region spans residues 23–48; that stretch reads EEVSQPEPNTANDSSTEYKGKSKDDF. Polar residues predominate over residues 28–37; the sequence is PEPNTANDSS. Positions 38 to 48 are enriched in basic and acidic residues; it reads TEYKGKSKDDF. The chain crosses the membrane as a helical span at residues 85 to 105; sequence LMFCIIACSFICAIQFLFFII.

It localises to the membrane. This is an uncharacterized protein from Saccharomyces cerevisiae (strain ATCC 204508 / S288c) (Baker's yeast).